Consider the following 419-residue polypeptide: MGRKSNESCSANPHSSSISQENLSQWNLDAEDLFDENESFLSEKDGVAGGKTNKNHLESPAEQLVLQLTVSEHAHSRSQNNNQGVFQLWSSPVNKGSIIDKRNSSVEENVTDESDLSESEKMNDSLLSYFKKMDLNLKPETIEHVERAFTEEANQVSVYADFLPAPFNTMDLHRFAFSKCESWKTTVDPPESSIERLIMRLLELERLQHMTIQRERPKLQSTFCSSMFSMAERPSSSKAITLKARPPKIPETPTLQTSSVDKNRDKRKNNSGSGKPEQNVPKWSLSTAGKSKSNSRSLLKCSSTSKQCAMAHDDVKNPKNSILNPCQDPPPKPTTTTQAIQPMIKVVSTRCLPPRSPMPVSPIPLSFPENPREEVKVPRTKKKCHRKSILQNRPFHVQKRNCLSPSLIARGKCSPTDQK.

Disordered regions lie at residues 1–23 (MGRKSNESCSANPHSSSISQENL), 100–119 (DKRNSSVEENVTDESDLSES), 234–298 (PSSS…SRSL), and 362–388 (PIPLSFPENPREEVKVPRTKKKCHRKS). A compositionally biased stretch (polar residues) spans 7–23 (ESCSANPHSSSISQENL). The segment covering 284 to 298 (SLSTAGKSKSNSRSL) has biased composition (polar residues). Over residues 378–388 (PRTKKKCHRKS) the composition is skewed to basic residues.

This sequence belongs to the FAM217 family.

The chain is Protein FAM217A (Fam217a) from Rattus norvegicus (Rat).